Here is an 85-residue protein sequence, read N- to C-terminus: Hepcidin (85 aa).

An N-terminal signal peptide occupies residues M1–A24. The propeptide occupies V25 to A64. 4 disulfides stabilise this stretch: C66–C83, C69–C72, C70–C79, and C73–C82.

In terms of assembly, monomer. Expressed in all tissues tested, with highest levels of expression in kidney and lowest levels in liver. Intra-peritoneal injection of lipopolysaccharide results in increased expression in heart, spleen and stomach, but not in kidney or liver.

It is found in the secreted. Seems to act as a signaling molecule involved in the maintenance of iron homeostasis. Seems to be required in conjunction with HFE to regulate both intestinal iron absorption and iron storage in macrophages. Functionally, has very strong antibacterial activity against the marine Gram-negative bacteria V.alginolyticus (MIC=24 uM), V.fluvialis, V.harveyis (MIC=12 uM) and V.parahaemolyticus (MIC=6 uM). Has antibacterial activity against the Gram-negative bacteria A.hydrophila (MIC=6 uM), E.coli (MIC=24 uM), and E.coli BL21(DE3)plysS (MIC=6 uM), and the Gram-positive bacteria B.cereus (MIC=24 uM), B.subtilis (MIC=6 uM), C.glutamicum (MIC=3 uM), M.luteus (MIC=3 uM), M.lysodeikticus, S.aureus (MIC=6 uM) and S.epidermis (MIC=12 uM). Possesses antifungal activity against A.niger (MIC=24 uM), F.graminearum (MIC24 uM) and F.solani (MIC=24 uM), but lacks antifungal activity against the yeasts P.pastoris GS115 and C.albicans. The polypeptide is Hepcidin (Larimichthys crocea (Large yellow croaker)).